An 831-amino-acid chain; its full sequence is SID1 transmembrane family member 1 (831 aa).

An N-terminal signal peptide occupies residues 1-19 (MLDCPRLALLCALPWLLRA). Over 20–308 (AVPGHRAEPL…SVKGSVYVKS (289 aa)) the chain is Extracellular. N67, N83, N136, and N281 each carry an N-linked (GlcNAc...) asparagine glycan. A helical transmembrane segment spans residues 309–329 (SLFSVFVFLSFYLGCLLVVFV). The Cytoplasmic segment spans residues 330–441 (HHMRFQRKPV…DRRIVSKKYK (112 aa)). The disordered stretch occupies residues 354–408 (VSHPITASTPEGSNYGAIDESSSSPGRQMSSSDGGQPCHSDTDSSVEESDFDTMP). The span at 374–385 (SSSSPGRQMSSS) shows a compositional bias: low complexity. Acidic residues predominate over residues 397–408 (SSVEESDFDTMP). A helical transmembrane segment spans residues 442 to 462 (IYFWNIITIAVFYALPVMQLV). Over 463–493 (ITYQTVVNVTGNQDICYYNFLCAHPLGVLSA) the chain is Extracellular. A glycan (N-linked (GlcNAc...) asparagine) is linked at N470. A helical membrane pass occupies residues 494–514 (FNNILSNLGHVLLGFLFLLIV). The Cytoplasmic segment spans residues 515–540 (LRRDLLHRRALEAKDIFAMEYGIPKH). Residues 541–561 (FGLFYAMGIALMMEGVLSACY) traverse the membrane as a helical segment. Over 562 to 571 (HVCPNYSNFQ) the chain is Extracellular. N566 is a glycosylation site (N-linked (GlcNAc...) asparagine). The helical transmembrane segment at 572 to 589 (FDTSFMYMIAGLCMLKLY) threads the bilayer. Over 590–599 (QTRHPDINAS) the chain is Cytoplasmic. The chain crosses the membrane as a helical span at residues 600–620 (AYSAYASFAVVITLTVLGVVF). The Extracellular portion of the chain corresponds to 621–625 (GKNDV). The chain crosses the membrane as a helical span at residues 626–646 (WFWIIFSAIHVLASLALSTQI). Residues 647–687 (YYMGRFKIDVSDTDLGIFRRAAMVFYTDCIQQCSRPLYMDR) lie on the Cytoplasmic side of the membrane. The chain crosses the membrane as a helical span at residues 688–708 (MVLLIVGNLVNWSFALFGLIY). Topologically, residues 709–714 (RPRDFA) are extracellular. The helical transmembrane segment at 715 to 735 (SYMLGIFICNLLLYLAFYIIM) threads the bilayer. Residues 736-745 (KLRSSEKVLP) lie on the Cytoplasmic side of the membrane. A helical membrane pass occupies residues 746–766 (LPVFCIVATAVVWAAALYFFF). At 767-795 (QNLSSWEGTPAESREKNRECVLLGFFDDH) the chain is on the extracellular side. N768 carries an N-linked (GlcNAc...) asparagine glycan. The helical transmembrane segment at 796–816 (DIWHFLSATALFFSFLVLLTL) threads the bilayer. Residues 817 to 831 (DDDLDVVRRDQIPVF) lie on the Cytoplasmic side of the membrane.

The protein belongs to the SID1 family.

The protein resides in the membrane. Its function is as follows. In vitro binds long double-stranded RNA (dsRNA) (500 and 700 base pairs), but not dsRNA shorter than 300 bp. Not involved in RNA autophagy, a process in which RNA is directly imported into lysosomes in an ATP-dependent manner, and degraded. The chain is SID1 transmembrane family member 1 (Sidt1) from Rattus norvegicus (Rat).